A 252-amino-acid chain; its full sequence is MPYIDLNADLGEGFGIWQLGDDDAMLGIVTSANVACGFHAGEPAGLLRVCRAAAERGVRIGAQVGYRDLAGFGRRFIDVDPEDLVAEVVYQIGALQAIAQSCGSTVSYVKPHGALYNTIVTHRDQAAAVAEAVRMVDATLPVLGMTGSVFFQQATDLGLRTVAEAFADRAYRSDGQLVSRREHGAVLADAAAIAQRAVSMVASGKVTAVDGTQVPITMESICVHGDSPGAMQIATAVRDRLTAAGNEIRAFC.

This sequence belongs to the LamB/PxpA family. Forms a complex composed of PxpA, PxpB and PxpC.

It catalyses the reaction 5-oxo-L-proline + ATP + 2 H2O = L-glutamate + ADP + phosphate + H(+). Functionally, catalyzes the cleavage of 5-oxoproline to form L-glutamate coupled to the hydrolysis of ATP to ADP and inorganic phosphate. This is 5-oxoprolinase subunit A from Mycobacterium ulcerans (strain Agy99).